We begin with the raw amino-acid sequence, 220 residues long: Nucleolar protein 12 (220 aa).

Residues 31–86 are a coiled coil; it reads HKRKMQRRKTAVEEIKRKIKEEQKKMKEERHKEYMKMLKEREEALCELEENDELEE. The interval 109-220 is disordered; sequence ISDLDLSGIR…QTGKTRRRRN (112 aa). Basic and acidic residues predominate over residues 139–148; the sequence is EKGADEEKPK. Basic residues-rich tracts occupy residues 176–186 and 205–220; these read RSQRKSGKRPS and KTQR…RRRN.

Belongs to the RRP17 family.

The protein resides in the nucleus. Its subcellular location is the nucleolus. Its function is as follows. May bind to rRNA. The sequence is that of Nucleolar protein 12 (nol12) from Xenopus laevis (African clawed frog).